Reading from the N-terminus, the 46-residue chain is U2-plectoxin-Pt1a (46 aa).

In terms of processing, contains 4 disulfide bonds. In terms of tissue distribution, expressed by the venom gland.

Its subcellular location is the secreted. Functionally, potent toxin that may paralyze and/or kill insect pests such as H.virescens (lepidoptera), S.exigua (beet armyworm) and M.sexta (tobacco hornworm). This Plectreurys tristis (Spider) protein is U2-plectoxin-Pt1a.